The sequence spans 128 residues: Small ribosomal subunit protein uS12 (128 aa).

A disordered region spans residues 1–30; it reads MPTINQLIRKGREPKERKSKSPALMGNPQK. Aspartate 89 is subject to 3-methylthioaspartic acid. The segment at 106 to 128 is disordered; the sequence is GVEGRKQGRSKYGTKRPKEGGKK.

Belongs to the universal ribosomal protein uS12 family. In terms of assembly, part of the 30S ribosomal subunit. Contacts proteins S8 and S17. May interact with IF1 in the 30S initiation complex.

Its function is as follows. With S4 and S5 plays an important role in translational accuracy. Functionally, interacts with and stabilizes bases of the 16S rRNA that are involved in tRNA selection in the A site and with the mRNA backbone. Located at the interface of the 30S and 50S subunits, it traverses the body of the 30S subunit contacting proteins on the other side and probably holding the rRNA structure together. The combined cluster of proteins S8, S12 and S17 appears to hold together the shoulder and platform of the 30S subunit. In Dictyoglomus thermophilum (strain ATCC 35947 / DSM 3960 / H-6-12), this protein is Small ribosomal subunit protein uS12.